A 548-amino-acid chain; its full sequence is Chaperonin GroEL (548 aa).

ATP contacts are provided by residues 30 to 33 (TLGP), lysine 51, 87 to 91 (DGTTT), glycine 415, 479 to 481 (NAA), and aspartate 495.

The protein belongs to the chaperonin (HSP60) family. In terms of assembly, forms a cylinder of 14 subunits composed of two heptameric rings stacked back-to-back. Interacts with the co-chaperonin GroES.

Its subcellular location is the cytoplasm. It catalyses the reaction ATP + H2O + a folded polypeptide = ADP + phosphate + an unfolded polypeptide.. In terms of biological role, together with its co-chaperonin GroES, plays an essential role in assisting protein folding. The GroEL-GroES system forms a nano-cage that allows encapsulation of the non-native substrate proteins and provides a physical environment optimized to promote and accelerate protein folding. In Pseudomonas fluorescens (strain Pf0-1), this protein is Chaperonin GroEL.